A 337-amino-acid polypeptide reads, in one-letter code: Vegetative-specific protein H5 (337 aa).

Positions 88–90 (HGG) match the Involved in the stabilization of the negatively charged intermediate by the formation of the oxyanion hole motif. Active-site residues include serine 161, aspartate 261, and histidine 291.

The protein belongs to the 'GDXG' lipolytic enzyme family.

The polypeptide is Vegetative-specific protein H5 (cinB) (Dictyostelium discoideum (Social amoeba)).